Here is an 852-residue protein sequence, read N- to C-terminus: Lon protease homolog 2, peroxisomal (852 aa).

Position 2 is an N-acetylserine (Ser-2). The Lon N-terminal domain maps to 13 to 222 (LPLLLTHEGV…MTIPLLVRQI (210 aa)). 375–382 (GPPGVGKT) serves as a coordination point for ATP. In terms of domain architecture, Lon proteolytic spans 651 to 837 (LSQPGVAIGL…DEVLNAAFDG (187 aa)). Residues Ser-743 and Lys-786 contribute to the active site. A Microbody targeting signal motif is present at residues 850–852 (SKL).

The protein belongs to the peptidase S16 family. In terms of assembly, interacts with PEX5. Interacts with TYSND1. May interact with enzymes involved in beta-oxidation of fatty acids, including ACOX1/AOX. As to expression, widely expressed, with high levels in the liver, kidney and pancreas.

Its subcellular location is the peroxisome matrix. The enzyme catalyses Hydrolysis of proteins in presence of ATP.. ATP-dependent serine protease that mediates the selective degradation of misfolded and unassembled polypeptides in the peroxisomal matrix. Necessary for type 2 peroxisome targeting signal (PTS2)-containing protein processing and facilitates peroxisome matrix protein import. May indirectly regulate peroxisomal fatty acid beta-oxidation through degradation of the self-processed forms of TYSND1. This is Lon protease homolog 2, peroxisomal from Homo sapiens (Human).